The sequence spans 87 residues: Small ribosomal subunit protein uS17 (87 aa).

The protein belongs to the universal ribosomal protein uS17 family. In terms of assembly, part of the 30S ribosomal subunit.

Functionally, one of the primary rRNA binding proteins, it binds specifically to the 5'-end of 16S ribosomal RNA. In Macrococcus caseolyticus (strain JCSC5402) (Macrococcoides caseolyticum), this protein is Small ribosomal subunit protein uS17.